Reading from the N-terminus, the 431-residue chain is Enolase (431 aa).

Glutamine 162 lines the (2R)-2-phosphoglycerate pocket. Glutamate 204 functions as the Proton donor in the catalytic mechanism. Residues aspartate 241, glutamate 284, and aspartate 311 each contribute to the Mg(2+) site. Residues lysine 336, arginine 365, serine 366, and lysine 387 each contribute to the (2R)-2-phosphoglycerate site. Catalysis depends on lysine 336, which acts as the Proton acceptor.

Belongs to the enolase family. Mg(2+) serves as cofactor.

The protein localises to the cytoplasm. It localises to the secreted. The protein resides in the cell surface. It carries out the reaction (2R)-2-phosphoglycerate = phosphoenolpyruvate + H2O. It functions in the pathway carbohydrate degradation; glycolysis; pyruvate from D-glyceraldehyde 3-phosphate: step 4/5. Catalyzes the reversible conversion of 2-phosphoglycerate (2-PG) into phosphoenolpyruvate (PEP). It is essential for the degradation of carbohydrates via glycolysis. This Sorangium cellulosum (strain So ce56) (Polyangium cellulosum (strain So ce56)) protein is Enolase.